The sequence spans 239 residues: Probable replication-associated protein repA2 (239 aa).

Belongs to the IncFII RepA family.

This protein is essential for plasmid replication; it is involved in copy control functions. The chain is Probable replication-associated protein repA2 (repA2) from Buchnera aphidicola subsp. Baizongia pistaciae (strain Bp).